Reading from the N-terminus, the 1171-residue chain is DNA polymerase catalytic subunit (1171 aa).

3 disordered regions span residues 647-687, 704-735, and 1149-1171; these read GTPA…PFRT, PGGG…EPAP, and VEEE…DSSR. A compositionally biased stretch (pro residues) spans 649 to 662; the sequence is PARPPETPARPPET. 2 stretches are compositionally biased toward low complexity: residues 663–674 and 709–725; these read PAAGPSGAAHAG and VSSA…PSET. Residues 1149 to 1158 show a composition bias toward basic and acidic residues; the sequence is VEEEVCESER.

This sequence belongs to the DNA polymerase type-B family.

It localises to the host nucleus. It catalyses the reaction DNA(n) + a 2'-deoxyribonucleoside 5'-triphosphate = DNA(n+1) + diphosphate. This Tupaia belangeri (Common tree shrew) protein is DNA polymerase catalytic subunit (DPOL).